Consider the following 692-residue polypeptide: ATP-dependent RNA helicase MSS116, mitochondrial (692 aa).

A mitochondrion-targeting transit peptide spans 1-37 (MMIARFGKQVLRKNVLVSNRIHFPVISRGFHNSFINK). A disordered region spans residues 82 to 113 (SQVTEQTELTKSEEEEKKKKNINTNTNKNDRK). A compositionally biased stretch (basic and acidic residues) spans 89 to 99 (ELTKSEEEEKK). The Q motif signature appears at 130-158 (DFKNTGLIDDVILRALDRAHFKDLTPIQQ). Positions 162-349 (VPLLETERGM…KQHINKKYDY (188 aa)) constitute a Helicase ATP-binding domain. Position 175–182 (175–182 (AKTGTGKT)) interacts with ATP. Positions 290–293 (DEAD) match the DEAD box motif. The 151-residue stretch at 384 to 534 (YVNQLVKDSP…QVHESSEIDN (151 aa)) folds into the Helicase C-terminal domain. Positions 643–692 (NRYSGGGGNRSEKRFSFAGRGGNSGGHSGRGRGGRSGYSGGRSSQYSDWE) are disordered. Residues 661–670 (GRGGNSGGHS) show a composition bias toward gly residues.

Belongs to the DEAD box helicase family. DDX18/HAS1 subfamily.

The protein resides in the mitochondrion matrix. The catalysed reaction is ATP + H2O = ADP + phosphate + H(+). Its function is as follows. ATP-dependent RNA helicase required for mitochondrial splicing of group I and II introns. Also required for efficient mitochondrial translation. The protein is ATP-dependent RNA helicase MSS116, mitochondrial (MSS116) of Lodderomyces elongisporus (strain ATCC 11503 / CBS 2605 / JCM 1781 / NBRC 1676 / NRRL YB-4239) (Yeast).